The primary structure comprises 433 residues: Small ribosomal subunit biogenesis GTPase RsgA 1, mitochondrial (433 aa).

Positions 1–20 are disordered; that stretch reads MLRAKHIGKNYSSSLSPVLS. The region spanning 113-291 is the CP-type G domain; sequence SEILDPPVAN…LADTPGFNQP (179 aa). 212 to 220 lines the GTP pocket; the sequence is GPSGVGKSS. Residues Cys317, Cys322, His324, and Cys330 each contribute to the Zn(2+) site.

It belongs to the TRAFAC class YlqF/YawG GTPase family. RsgA subfamily. In terms of assembly, monomer. Associates with 30S ribosomal subunit, binds 16S rRNA. It depends on Zn(2+) as a cofactor.

It is found in the mitochondrion. Functionally, one of several proteins that assist in the late maturation steps of the functional core of the 30S ribosomal subunit. Helps release RbfA from mature subunits. May play a role in the assembly of ribosomal proteins into the subunit. Circularly permuted GTPase that catalyzes slow GTP hydrolysis, GTPase activity is stimulated by the 30S ribosomal subunit. Required for embryo development. This is Small ribosomal subunit biogenesis GTPase RsgA 1, mitochondrial from Arabidopsis thaliana (Mouse-ear cress).